The chain runs to 259 residues: MPRVSIVEKSQLFLKAIVEGVPPSLVNSLRRVIISELPVMAIDTVVVVNNTSVMYDEFLAQRLGLIPLTTPLHSLPTYEECATGVADPTECGTRLVLQVTADGDVTVYSGDLTSERPDVVPVYKDIPIVKLVKGQSIVIEAYAKLGIAKDHAKWQAATASYYYYPKVIIKDEKCREICKEICPDLEDPVKCTFNKAWTCKDLCKGGLDVEWEKNKYVFWVESFGNYGVDVALKEAFRILKRKFEAFTEELVKKASSGER.

The protein belongs to the archaeal Rpo3/eukaryotic RPB3 RNA polymerase subunit family. As to quaternary structure, part of the RNA polymerase complex.

The protein resides in the cytoplasm. The catalysed reaction is RNA(n) + a ribonucleoside 5'-triphosphate = RNA(n+1) + diphosphate. Its function is as follows. DNA-dependent RNA polymerase (RNAP) catalyzes the transcription of DNA into RNA using the four ribonucleoside triphosphates as substrates. The polypeptide is DNA-directed RNA polymerase subunit Rpo3 (Pyrobaculum arsenaticum (strain DSM 13514 / JCM 11321 / PZ6)).